A 157-amino-acid polypeptide reads, in one-letter code: Transcription elongation factor GreA (157 aa).

Belongs to the GreA/GreB family.

Functionally, necessary for efficient RNA polymerase transcription elongation past template-encoded arresting sites. The arresting sites in DNA have the property of trapping a certain fraction of elongating RNA polymerases that pass through, resulting in locked ternary complexes. Cleavage of the nascent transcript by cleavage factors such as GreA or GreB allows the resumption of elongation from the new 3'terminus. GreA releases sequences of 2 to 3 nucleotides. This is Transcription elongation factor GreA from Mesorhizobium japonicum (strain LMG 29417 / CECT 9101 / MAFF 303099) (Mesorhizobium loti (strain MAFF 303099)).